A 59-amino-acid chain; its full sequence is Potassium channel toxin alpha-KTx 1.1 (59 aa).

A signal peptide spans 1–22; it reads MKILSVLLLALIICSIVGWSEA. Pyrrolidone carboxylic acid is present on Gln-23. 3 cysteine pairs are disulfide-bonded: Cys-29/Cys-50, Cys-35/Cys-55, and Cys-39/Cys-57. Residues 48 to 55 form an interaction with Ca(2+)-activated K(+) channels region; sequence GKCMNKKC.

This sequence belongs to the short scorpion toxin superfamily. Potassium channel inhibitor family. Alpha-KTx 01 subfamily. In terms of tissue distribution, expressed by the venom gland.

It localises to the secreted. In terms of biological role, this toxin inhibits numerous potassium channels: shaker (Ki=227 nM), Kv1.2/KCNA2 (nanomolar range), Kv1.3/KCNA3 (nanomolar range), Kv1.5/KCNA5 (Kd&gt;100 nM), Kv1.6/KCNA6 (Ki=22 nM), KCa1.1/KCNMA1 (IC(50)=5.9 nM). It blocks channel activity by a simple bimolecular inhibition process. It also shows a weak interaction with nicotinic acetylcholine receptors (nAChR), suggesting it may weakly inhibit it. It also exhibits pH-specific antimicrobial activities against bacteria (B.subtilis, E.coli and S.aureus) and the fungus C.albicans. This chain is Potassium channel toxin alpha-KTx 1.1, found in Leiurus hebraeus (Hebrew deathstalker scorpion).